We begin with the raw amino-acid sequence, 430 residues long: Glutamate-1-semialdehyde 2,1-aminomutase (430 aa).

N6-(pyridoxal phosphate)lysine is present on Lys-265.

This sequence belongs to the class-III pyridoxal-phosphate-dependent aminotransferase family. HemL subfamily. Homodimer. Pyridoxal 5'-phosphate is required as a cofactor.

It localises to the cytoplasm. It catalyses the reaction (S)-4-amino-5-oxopentanoate = 5-aminolevulinate. The protein operates within porphyrin-containing compound metabolism; protoporphyrin-IX biosynthesis; 5-aminolevulinate from L-glutamyl-tRNA(Glu): step 2/2. This is Glutamate-1-semialdehyde 2,1-aminomutase from Shewanella baltica (strain OS223).